The following is a 137-amino-acid chain: Small ribosomal subunit protein uS9 (137 aa).

The interval 118–137 is disordered; the sequence is KERKKYGLRKARKAPQYSKR.

Belongs to the universal ribosomal protein uS9 family.

The chain is Small ribosomal subunit protein uS9 from Acaryochloris marina (strain MBIC 11017).